A 488-amino-acid polypeptide reads, in one-letter code: (Z)-2-((N-methylformamido)methylene)-5-hydroxybutyrolactone dehydrogenase (488 aa).

Residues tryptophan 149–asparagine 150 and glycine 226–glycine 227 each bind NAD(+). The active-site Proton acceptor is the glutamate 248. NAD(+) is bound at residue leucine 249. The active-site Nucleophile is the cysteine 282. Position 380 (glutamate 380) interacts with NAD(+).

Belongs to the aldehyde dehydrogenase family. Homodimer.

The enzyme catalyses (Z)-2-((N-methylformamido)methylene)-5-hydroxybutanolactone + NAD(+) + H2O = (E)-2-((N-methylformamido) methylene)succinate + NADH + 3 H(+). In terms of biological role, involved in the degradation of the pyridine ring of trigonelline (TG; N-methylnicotinate) into succinate and methylamine as carbon and nitrogen sources, respectively. Catalyzes the NAD(+)-dependent oxidation of (Z)-2-((N-methylformamido)methylene)-5-hydroxybutyrolactone (MFMB) to yield (E)-2-((N-methylformamido)methylene)succinate (MFMS). The chain is (Z)-2-((N-methylformamido)methylene)-5-hydroxybutyrolactone dehydrogenase from Acinetobacter baylyi (strain ATCC 33305 / BD413 / ADP1).